The sequence spans 199 residues: uncharacterized protein (199 aa).

A helical membrane pass occupies residues 17–37 (AGAVTLGIGFFALASALWFLI).

The protein localises to the membrane. This is an uncharacterized protein from Homo sapiens (Human).